The chain runs to 327 residues: 7,8-didemethyl-8-hydroxy-5-deazariboflavin synthase (327 aa).

A Radical SAM core domain is found at 6–244 (ITFSRNVFLP…EEVAVQVAPN (239 aa)). The [4Fe-4S] cluster site is built by Cys-20, Cys-24, and Cys-27.

Belongs to the radical SAM superfamily. CofG family. As to quaternary structure, consists of two subunits, CofG and CofH. [4Fe-4S] cluster serves as cofactor.

It carries out the reaction 5-amino-5-(4-hydroxybenzyl)-6-(D-ribitylimino)-5,6-dihydrouracil + S-adenosyl-L-methionine = 7,8-didemethyl-8-hydroxy-5-deazariboflavin + 5'-deoxyadenosine + L-methionine + NH4(+) + H(+). Its pathway is cofactor biosynthesis; coenzyme F0 biosynthesis. In terms of biological role, catalyzes the radical-mediated synthesis of 7,8-didemethyl-8-hydroxy-5-deazariboflavin from 5-amino-5-(4-hydroxybenzyl)-6-(D-ribitylimino)-5,6-dihydrouracil. In Methanosphaerula palustris (strain ATCC BAA-1556 / DSM 19958 / E1-9c), this protein is 7,8-didemethyl-8-hydroxy-5-deazariboflavin synthase.